The chain runs to 270 residues: tRNA pseudouridine synthase A (270 aa).

D51 acts as the Nucleophile in catalysis. Residue Y109 participates in substrate binding.

This sequence belongs to the tRNA pseudouridine synthase TruA family. In terms of assembly, homodimer.

It catalyses the reaction uridine(38/39/40) in tRNA = pseudouridine(38/39/40) in tRNA. Formation of pseudouridine at positions 38, 39 and 40 in the anticodon stem and loop of transfer RNAs. This Burkholderia vietnamiensis (strain G4 / LMG 22486) (Burkholderia cepacia (strain R1808)) protein is tRNA pseudouridine synthase A.